We begin with the raw amino-acid sequence, 186 residues long: ATP-dependent protease subunit HslV (186 aa).

Threonine 13 is a catalytic residue. Positions 167, 170, and 173 each coordinate Na(+).

Belongs to the peptidase T1B family. HslV subfamily. As to quaternary structure, a double ring-shaped homohexamer of HslV is capped on each side by a ring-shaped HslU homohexamer. The assembly of the HslU/HslV complex is dependent on binding of ATP.

It localises to the cytoplasm. The catalysed reaction is ATP-dependent cleavage of peptide bonds with broad specificity.. Allosterically activated by HslU binding. Functionally, protease subunit of a proteasome-like degradation complex believed to be a general protein degrading machinery. The sequence is that of ATP-dependent protease subunit HslV from Allorhizobium ampelinum (strain ATCC BAA-846 / DSM 112012 / S4) (Agrobacterium vitis (strain S4)).